A 130-amino-acid polypeptide reads, in one-letter code: Small ribosomal subunit protein uS9 (130 aa).

Residues 109 to 130 (RKKERKKYGQRAARARYQYSKR) form a disordered region.

Belongs to the universal ribosomal protein uS9 family.

This Nitratidesulfovibrio vulgaris (strain DSM 19637 / Miyazaki F) (Desulfovibrio vulgaris) protein is Small ribosomal subunit protein uS9.